The chain runs to 146 residues: Hemoglobin subunit beta (146 aa).

Residues 2-146 (HWTAEEKQLI…VAHALARKYH (145 aa)) form the Globin domain. Heme b is bound by residues histidine 63 and histidine 92.

Belongs to the globin family. As to quaternary structure, heterotetramer of two alpha chains and two beta chains. In terms of tissue distribution, red blood cells.

Involved in oxygen transport from the lung to the various peripheral tissues. The sequence is that of Hemoglobin subunit beta (HBB) from Anas platyrhynchos platyrhynchos (Northern mallard).